Here is a 493-residue protein sequence, read N- to C-terminus: Alginate production protein AlgE (493 aa).

An N-terminal signal peptide occupies residues 1–25; it reads MKLNPLMAAGMGLGFTLFWACPTLA. Over residues 93–111 the composition is skewed to polar residues; sequence DPLEQSNSDGSGTQTSRGT. Residues 93–115 form a disordered region; that stretch reads DPLEQSNSDGSGTQTSRGTASER.

It belongs to the AlgE family.

It localises to the cell outer membrane. It participates in glycan biosynthesis; alginate biosynthesis. Has non-porin-like, channel-forming properties and probably functions as an alginate permeability pore. The sequence is that of Alginate production protein AlgE (algE) from Pseudomonas syringae pv. tomato (strain ATCC BAA-871 / DC3000).